A 401-amino-acid chain; its full sequence is Phosphoglycerate kinase (401 aa).

Residues 20–22, arginine 35, 58–61, arginine 117, and arginine 154 contribute to the substrate site; these read DFN and HLGR. Residues lysine 204, glycine 298, glutamate 329, and 358–361 each bind ATP; that span reads GGDS.

It belongs to the phosphoglycerate kinase family. Monomer.

Its subcellular location is the cytoplasm. The catalysed reaction is (2R)-3-phosphoglycerate + ATP = (2R)-3-phospho-glyceroyl phosphate + ADP. It participates in carbohydrate degradation; glycolysis; pyruvate from D-glyceraldehyde 3-phosphate: step 2/5. The polypeptide is Phosphoglycerate kinase (Bifidobacterium longum (strain DJO10A)).